Consider the following 423-residue polypeptide: Serine hydroxymethyltransferase (423 aa).

(6S)-5,6,7,8-tetrahydrofolate-binding positions include Leu120 and 124-126 (GHL). Lys229 bears the N6-(pyridoxal phosphate)lysine mark. (6S)-5,6,7,8-tetrahydrofolate is bound at residue 353–355 (SPF).

Belongs to the SHMT family. In terms of assembly, homodimer. Requires pyridoxal 5'-phosphate as cofactor.

It is found in the cytoplasm. The catalysed reaction is (6R)-5,10-methylene-5,6,7,8-tetrahydrofolate + glycine + H2O = (6S)-5,6,7,8-tetrahydrofolate + L-serine. Its pathway is one-carbon metabolism; tetrahydrofolate interconversion. It functions in the pathway amino-acid biosynthesis; glycine biosynthesis; glycine from L-serine: step 1/1. Its function is as follows. Catalyzes the reversible interconversion of serine and glycine with tetrahydrofolate (THF) serving as the one-carbon carrier. This reaction serves as the major source of one-carbon groups required for the biosynthesis of purines, thymidylate, methionine, and other important biomolecules. Also exhibits THF-independent aldolase activity toward beta-hydroxyamino acids, producing glycine and aldehydes, via a retro-aldol mechanism. This chain is Serine hydroxymethyltransferase, found in Synechococcus sp. (strain RCC307).